The chain runs to 247 residues: SFKSDEAKQELADLNADLMVFVAYGMLLPQAVLDTPKLGCINVHGSILPRWRCAAPIQRSIWAGDAETGVTIMQMDIGLDTGDMLKIATLPIETTDTSASMYEKLAELGPEALIDCLADIAAGKAVPVKQDDELANYAKKLSKEEARINWNDDAAHIERCVRAFNPWPMSHFEAAENSIKVWKAVWQSKPVTTSGTIVQADKTGIYVVTGNGVLVLEQLQVPGKKAMSVQDILNSRAAWFEVGTLLV.

This sequence belongs to the Fmt family.

The enzyme catalyses L-methionyl-tRNA(fMet) + (6R)-10-formyltetrahydrofolate = N-formyl-L-methionyl-tRNA(fMet) + (6S)-5,6,7,8-tetrahydrofolate + H(+). Functionally, attaches a formyl group to the free amino group of methionyl-tRNA(fMet). The formyl group appears to play a dual role in the initiator identity of N-formylmethionyl-tRNA by promoting its recognition by IF2 and preventing the misappropriation of this tRNA by the elongation apparatus. The protein is Methionyl-tRNA formyltransferase (fmt) of Vibrio alginolyticus.